The following is a 396-amino-acid chain: MSSDTKTLENSKGNSATDADTKNPSSSDSRAIEQLVTQGNMAYAQKNYEEAVDKYGQALMQSESIHGSESLENRNVLWLYGKSLFQIAIENSQVLGNALGAKESVSQATESFEEPEAIGSFTFSGQKIENKYTVNEENSSIAHPEKESEEKETNEASPASEEDEDDFNVAWEVLDLTRVMQSKAVDAYPDSKDEKIRLADIYDLLGELSLEIENFSQASQDLKTALEWKEKVYNVSNNTLLSEAHYKLALALEFTNPEDPSNKSRACEHVEKAAEILKNVLNERENEVTDKKGKGKQKAEESTLTSDLENLREMLSELEQKTLDLKHGAPSLEEAVMSKMHESSLLSKDSSSLAQAVAEAVKNANDLGGLVKRKRTKQEVTSSSQKEGPKDKKKKD.

Residues 1–31 (MSSDTKTLENSKGNSATDADTKNPSSSDSRA) are disordered. TPR repeat units follow at residues 32 to 65 (IEQL…SESI) and 89 to 122 (IENS…GSFT). Residues 135–164 (NEENSSIAHPEKESEEKETNEASPASEEDE) are disordered. Basic and acidic residues predominate over residues 143–154 (HPEKESEEKETN). One copy of the TPR 3 repeat lies at 199–232 (ADIYDLLGELSLEIENFSQASQDLKTALEWKEKV). Positions 267–329 (CEHVEKAAEI…QKTLDLKHGA (63 aa)) form a coiled coil. Residues 284 to 301 (RENEVTDKKGKGKQKAEE) show a composition bias toward basic and acidic residues. Disordered stretches follow at residues 284 to 307 (RENE…LTSD) and 334 to 396 (EAVM…KKKD). The segment covering 343–353 (SSLLSKDSSSL) has biased composition (low complexity).

It belongs to the NASP family. Interacts with cnp1, hht1, hht2 and hht3; has a preference for CENP-A (cnp1) over histone H3 (hht1/2/3).

It is found in the nucleus. Its function is as follows. Histone H3 and H3-like CENP-A-specific chaperone. Promotes delivery and incorporation of CENP-A in centromeric chromatin, probably by escorting nascent CENP-A to CENP-A chromatin assembly factors. Required for central core silencing and normal chromosome segregation. This is NASP-related protein sim3 (sim3) from Schizosaccharomyces pombe (strain 972 / ATCC 24843) (Fission yeast).